A 503-amino-acid chain; its full sequence is Glucose-6-phosphate 1-dehydrogenase (503 aa).

Residues Gly-14–Lys-21, Arg-49, and Lys-158 contribute to the NADP(+) site. Residues Lys-158, His-188–Lys-192, Glu-226, and Asp-245 each bind D-glucose 6-phosphate. The Proton acceptor role is filled by His-250. Lys-341 serves as a coordination point for NADP(+). Residue Lys-344 coordinates D-glucose 6-phosphate. Positions 350, 354, and 376 each coordinate NADP(+). Gln-378 is a binding site for D-glucose 6-phosphate. Residues Tyr-384–Lys-386, Arg-471, and Tyr-487 contribute to the NADP(+) site.

The protein belongs to the glucose-6-phosphate dehydrogenase family.

The enzyme catalyses D-glucose 6-phosphate + NADP(+) = 6-phospho-D-glucono-1,5-lactone + NADPH + H(+). It functions in the pathway carbohydrate degradation; pentose phosphate pathway; D-ribulose 5-phosphate from D-glucose 6-phosphate (oxidative stage): step 1/3. Catalyzes the rate-limiting step of the oxidative pentose-phosphate pathway, which represents a route for the dissimilation of carbohydrates besides glycolysis. The main function of this enzyme is to provide reducing power (NADPH) and pentose phosphates for fatty acid and nucleic acid synthesis. The G6PDH activity is required to cope with hydrogen peroxide and potassium bisulfite stresses and plays a role in adaptation to conditions used in wine fermentations. This is Glucose-6-phosphate 1-dehydrogenase from Hanseniaspora uvarum (Yeast).